We begin with the raw amino-acid sequence, 264 residues long: Small ribosomal subunit protein eS1 (264 aa).

Lysine 34 carries the post-translational modification N6-acetyllysine; alternate. Residue lysine 34 forms a Glycyl lysine isopeptide (Lys-Gly) (interchain with G-Cter in SUMO2); alternate linkage. Lysine 56 bears the N6-acetyllysine mark. Position 155 is an ADP-ribosyltyrosine (tyrosine 155). The interval 232-264 (HGEGSSSGKATGDETGAKVERADGYEPPVQESV) is disordered. 2 positions are modified to phosphoserine: serine 236 and serine 237. Residues 242-255 (TGDETGAKVERADG) are compositionally biased toward basic and acidic residues. Lysine 249 bears the N6-acetyllysine; alternate mark. Lysine 249 is covalently cross-linked (Glycyl lysine isopeptide (Lys-Gly) (interchain with G-Cter in SUMO2); alternate). Position 256 is a phosphotyrosine (tyrosine 256). The residue at position 263 (serine 263) is a Phosphoserine.

It belongs to the eukaryotic ribosomal protein eS1 family. In terms of assembly, component of the small ribosomal subunit. Mature ribosomes consist of a small (40S) and a large (60S) subunit. The 40S subunit contains about 33 different proteins and 1 molecule of RNA (18S). The 60S subunit contains about 49 different proteins and 3 molecules of RNA (28S, 5.8S and 5S). Identified in a IGF2BP1-dependent mRNP granule complex containing untranslated mRNAs. Binds with high affinity to IPO4. Interacts with DDIT3. Part of the small subunit (SSU) processome, composed of more than 70 proteins and the RNA chaperone small nucleolar RNA (snoRNA) U3. Post-translationally, ADP-ribosylated at Tyr-155 by PARP1 in presence of HPF1.

The protein localises to the cytoplasm. Its subcellular location is the nucleus. The protein resides in the nucleolus. Functionally, component of the small ribosomal subunit. The ribosome is a large ribonucleoprotein complex responsible for the synthesis of proteins in the cell. Part of the small subunit (SSU) processome, first precursor of the small eukaryotic ribosomal subunit. During the assembly of the SSU processome in the nucleolus, many ribosome biogenesis factors, an RNA chaperone and ribosomal proteins associate with the nascent pre-rRNA and work in concert to generate RNA folding, modifications, rearrangements and cleavage as well as targeted degradation of pre-ribosomal RNA by the RNA exosome. May play a role during erythropoiesis through regulation of transcription factor DDIT3. In Bos taurus (Bovine), this protein is Small ribosomal subunit protein eS1.